The sequence spans 412 residues: Arginine biosynthesis bifunctional protein ArgJ (412 aa).

Residues Thr155, Lys181, Thr192, Glu279, Asn407, and Ser412 each contribute to the substrate site. The Nucleophile role is filled by Thr192.

It belongs to the ArgJ family. Heterotetramer of two alpha and two beta chains.

It is found in the cytoplasm. The catalysed reaction is N(2)-acetyl-L-ornithine + L-glutamate = N-acetyl-L-glutamate + L-ornithine. It carries out the reaction L-glutamate + acetyl-CoA = N-acetyl-L-glutamate + CoA + H(+). It participates in amino-acid biosynthesis; L-arginine biosynthesis; L-ornithine and N-acetyl-L-glutamate from L-glutamate and N(2)-acetyl-L-ornithine (cyclic): step 1/1. Its pathway is amino-acid biosynthesis; L-arginine biosynthesis; N(2)-acetyl-L-ornithine from L-glutamate: step 1/4. Catalyzes two activities which are involved in the cyclic version of arginine biosynthesis: the synthesis of N-acetylglutamate from glutamate and acetyl-CoA as the acetyl donor, and of ornithine by transacetylation between N(2)-acetylornithine and glutamate. The protein is Arginine biosynthesis bifunctional protein ArgJ of Aromatoleum aromaticum (strain DSM 19018 / LMG 30748 / EbN1) (Azoarcus sp. (strain EbN1)).